The sequence spans 685 residues: Exocyst complex component 8 (685 aa).

A PH domain is found at 151–251 (YLVYNGDLTE…WLEILEQTKK (101 aa)). The span at 254–263 (ALNEKQKQEE) shows a compositional bias: basic and acidic residues. Residues 254–273 (ALNEKQKQEETTPQLPVVPE) form a disordered region.

This sequence belongs to the EXO84 family. As to quaternary structure, the exocyst complex is composed of exoc1, exoc2, exoc3, exoc4, exoc5, exoc6, exoc7 and exoc8.

It localises to the cytoplasm. It is found in the perinuclear region. The protein resides in the cell projection. Its subcellular location is the growth cone. Component of the exocyst complex involved in the docking of exocytic vesicles with fusion sites on the plasma membrane. This is Exocyst complex component 8 (exoc8) from Xenopus laevis (African clawed frog).